A 392-amino-acid chain; its full sequence is ATP phosphoribosyltransferase regulatory subunit (392 aa).

The protein belongs to the class-II aminoacyl-tRNA synthetase family. HisZ subfamily. Heteromultimer composed of HisG and HisZ subunits.

The protein resides in the cytoplasm. It participates in amino-acid biosynthesis; L-histidine biosynthesis; L-histidine from 5-phospho-alpha-D-ribose 1-diphosphate: step 1/9. Functionally, required for the first step of histidine biosynthesis. May allow the feedback regulation of ATP phosphoribosyltransferase activity by histidine. The protein is ATP phosphoribosyltransferase regulatory subunit of Prochlorococcus marinus (strain MIT 9211).